Consider the following 115-residue polypeptide: Large ribosomal subunit protein bL19 (115 aa).

This sequence belongs to the bacterial ribosomal protein bL19 family.

In terms of biological role, this protein is located at the 30S-50S ribosomal subunit interface and may play a role in the structure and function of the aminoacyl-tRNA binding site. In Streptococcus pyogenes serotype M49 (strain NZ131), this protein is Large ribosomal subunit protein bL19.